An 833-amino-acid chain; its full sequence is Interleukin enhancer-binding factor 3 homolog (833 aa).

In terms of domain architecture, DZF spans 11–379 (RIFVNDDRHV…PMKRPIEEES (369 aa)). 2 disordered regions span residues 65 to 86 (VNAL…GEQA) and 339 to 403 (DPLP…KAEP). Phosphothreonine is present on T70. Residues 373 to 385 (RPIEEESTDEKNP) are compositionally biased toward basic and acidic residues. DRBM domains lie at 402 to 471 (EPAQ…DMGL) and 527 to 593 (HGKN…KLFP). Disordered stretches follow at residues 597–651 (NSEV…FNQG), 702–762 (QSDS…GGGA), and 775–833 (AYPS…YQYR). Positions 629–639 (GRGRGRGRGRG) are enriched in basic residues. Residues 640-651 (RGFNNGGGFNQG) are compositionally biased toward gly residues. Positions 775 to 818 (AYPSQVTGGQEYNYEGYSNQSNYNSQGGANQNFGGNSAPYNSGQ) are enriched in polar residues.

The protein localises to the nucleus. Its subcellular location is the nucleolus. It localises to the cytoplasm. Its function is as follows. RNA-binding protein that plays an essential role in the biogenesis of circular RNAs (circRNAs) which are produced by back-splicing circularization of pre-mRNAs. Within the nucleus, promotes circRNAs processing by stabilizing the regulatory elements residing in the flanking introns of the circularized exons. Plays thereby a role in the back-splicing of a subset of circRNAs. As a consequence, participates in a wide range of transcriptional and post-transcriptional processes. Binds to poly-U elements and AU-rich elements (AREs) in the 3'-UTR of target mRNAs. Upon viral infection, ILF3 accumulates in the cytoplasm and participates in the innate antiviral response. Mechanistically, ILF3 becomes phosphorylated and activated by the double-stranded RNA-activated protein kinase/PKR which releases ILF3 from cellular mature circRNAs. In turn, unbound ILF3 molecules are able to interact with and thus inhibit viral mRNAs. The chain is Interleukin enhancer-binding factor 3 homolog (ilf3) from Danio rerio (Zebrafish).